The following is an 86-amino-acid chain: Small ribosomal subunit protein bS20 (86 aa).

Positions 1-22 are disordered; the sequence is MANIASARKRARQAEKNRQHNM.

The protein belongs to the bacterial ribosomal protein bS20 family.

Binds directly to 16S ribosomal RNA. The sequence is that of Small ribosomal subunit protein bS20 from Thioalkalivibrio sulfidiphilus (strain HL-EbGR7).